Here is a 262-residue protein sequence, read N- to C-terminus: uncharacterized protein (262 aa).

In terms of domain architecture, Radical SAM core spans 1–211 (MAFHVMIIPS…LLYLLDSYLE (211 aa)). [4Fe-4S] cluster-binding residues include Cys-13, Cys-17, and Cys-20.

Belongs to the radical SAM superfamily. Anaerobic sulfatase-maturating enzyme family. It depends on [4Fe-4S] cluster as a cofactor.

This is an uncharacterized protein from Methanothermobacter thermautotrophicus (strain ATCC 29096 / DSM 1053 / JCM 10044 / NBRC 100330 / Delta H) (Methanobacterium thermoautotrophicum).